Consider the following 870-residue polypeptide: Probable disease resistance protein At1g59620 (870 aa).

Residues 123–432 form the NB-ARC domain; the sequence is DKRNMRQTFS…AAEGMPRPRY (310 aa). 167 to 174 contacts ATP; the sequence is GMGGIGKT. LRR repeat units follow at residues 543–567, 568–590, 703–726, 735–758, 759–786, and 808–833; these read LQLM…IGLL, IHLR…MQNL, MSGI…IYMP, PWHL…ILEK, LLQL…GFPQ, and MPRL…KFIT.

Belongs to the disease resistance NB-LRR family.

Probable disease resistance protein. The polypeptide is Probable disease resistance protein At1g59620 (Arabidopsis thaliana (Mouse-ear cress)).